Reading from the N-terminus, the 396-residue chain is Acetate kinase (396 aa).

Residue Asn-7 participates in Mg(2+) binding. Lys-14 contributes to the ATP binding site. Arg-91 provides a ligand contact to substrate. The Proton donor/acceptor role is filled by Asp-148. ATP is bound by residues 208 to 212 (HLGNG), 283 to 285 (DFR), and 331 to 335 (GLGEN). Position 384 (Glu-384) interacts with Mg(2+).

This sequence belongs to the acetokinase family. In terms of assembly, homodimer. Mg(2+) serves as cofactor. Mn(2+) is required as a cofactor.

It localises to the cytoplasm. It catalyses the reaction acetate + ATP = acetyl phosphate + ADP. It participates in metabolic intermediate biosynthesis; acetyl-CoA biosynthesis; acetyl-CoA from acetate: step 1/2. Its function is as follows. Catalyzes the formation of acetyl phosphate from acetate and ATP. Can also catalyze the reverse reaction. The protein is Acetate kinase of Alkaliphilus metalliredigens (strain QYMF).